The following is a 428-amino-acid chain: Enolase (428 aa).

Gln163 contributes to the (2R)-2-phosphoglycerate binding site. The active-site Proton donor is Glu205. Residues Asp242, Glu286, and Asp313 each coordinate Mg(2+). (2R)-2-phosphoglycerate is bound by residues Lys338, Arg367, Ser368, and Lys389. Lys338 functions as the Proton acceptor in the catalytic mechanism.

It belongs to the enolase family. The cofactor is Mg(2+).

Its subcellular location is the cytoplasm. It localises to the secreted. The protein localises to the cell surface. The catalysed reaction is (2R)-2-phosphoglycerate = phosphoenolpyruvate + H2O. Its pathway is carbohydrate degradation; glycolysis; pyruvate from D-glyceraldehyde 3-phosphate: step 4/5. Catalyzes the reversible conversion of 2-phosphoglycerate (2-PG) into phosphoenolpyruvate (PEP). It is essential for the degradation of carbohydrates via glycolysis. The polypeptide is Enolase (Acidovorax sp. (strain JS42)).